The primary structure comprises 599 residues: MKNIRNFSIIAHIDHGKSTLSDRIIQICGGLSDREMEAQVLDSMDLERERGITIKAQSVTLDFKASDGETYQLNFIDTPGHVDFSYEVSRSLAACEGALLVVDAGQGVEAQTLANCYTAMEMDLEVVPVLNKIDLPAADPERVAEEIEDIVGIDATDAVRCSAKTGVGVTDVLERLVRDIPPPQGDPDGPLQALIIDSWFDNYLGVVSLVRIKNGTMRKGDKIKVMSTGQTYNADRLGIFTPKQVDRTELKCGEVGWLVCAIKDILGAPVGDTLTSARNPAEKALPGFKKVKPQVYAGLFPVSSDDYESFRDALGKLSLNDASLFYEPENSSALGFGFRCGFLGLLHMEIIQERLEREYDLDLITTAPTVVYEVETTAKEIIYVDSPSKLPPLNNIYELREPIAECHMLLPQAYLGNVITLCIEKRGVQTNMVYHGNQVALTYEIPMAEVVLDFFDRLKSTSRGYASLDYNFKRFQASDMVRVDVLINNERVDALALITHRDNAQNRGRELVDKMKDLIPRQQFDIAIQAAIGTHIIARSTVKQLRKNVLAKCYGGDISRKKKLLQKQKEGKKRMKQIGNVELPQEAFLAILHVGKDNK.

The tr-type G domain maps to 2–184 (KNIRNFSIIA…RLVRDIPPPQ (183 aa)). Residues 14-19 (DHGKST) and 131-134 (NKID) contribute to the GTP site.

It belongs to the TRAFAC class translation factor GTPase superfamily. Classic translation factor GTPase family. LepA subfamily.

It is found in the cell inner membrane. It catalyses the reaction GTP + H2O = GDP + phosphate + H(+). In terms of biological role, required for accurate and efficient protein synthesis under certain stress conditions. May act as a fidelity factor of the translation reaction, by catalyzing a one-codon backward translocation of tRNAs on improperly translocated ribosomes. Back-translocation proceeds from a post-translocation (POST) complex to a pre-translocation (PRE) complex, thus giving elongation factor G a second chance to translocate the tRNAs correctly. Binds to ribosomes in a GTP-dependent manner. The chain is Elongation factor 4 from Salmonella arizonae (strain ATCC BAA-731 / CDC346-86 / RSK2980).